We begin with the raw amino-acid sequence, 563 residues long: Arginine--tRNA ligase (563 aa).

The 'HIGH' region signature appears at Pro-120–His-130.

Belongs to the class-I aminoacyl-tRNA synthetase family. Monomer.

It is found in the cytoplasm. It catalyses the reaction tRNA(Arg) + L-arginine + ATP = L-arginyl-tRNA(Arg) + AMP + diphosphate. This chain is Arginine--tRNA ligase, found in Clostridium botulinum (strain 657 / Type Ba4).